We begin with the raw amino-acid sequence, 229 residues long: N-acetyltransferase MPR1 (229 aa).

An N-acetyltransferase domain is found at 65-219 (FNLEIESGKT…DAIIYGKDLT (155 aa)). Asparagine 135 is a binding site for substrate. 145–150 (RGQKVG) contacts CoA. Residue 172–173 (NL) participates in substrate binding.

It belongs to the acetyltransferase family. In terms of assembly, homodimer. Not glycosylated.

Its subcellular location is the cytoplasm. The protein localises to the mitochondrion. The catalysed reaction is L-glutamate 5-semialdehyde + acetyl-CoA = N-acetyl-L-glutamate 5-semialdehyde + CoA + H(+). Functionally, N-acetyltransferase involved in oxidative stress resistance. Acetylates the toxic proline metabolism intermediate (S)-1-pyrroline-5-carboxylate (P5C), or more likely its spontaneously forming tautomer glutamate-5-semialdehyde (GSA) into N-acetyl-GSA for arginine synthesis in the mitochondria. P5C has been shown to increase the levels of reactive oxygen species (ROS) in the cell by inhibiting the function of the respiratory chain in the mitochondria. The enzyme is able to reduce intracellular ROS levels under P5C-induced oxidative stress and protects cells from damage by oxidative stress. Also acetylates and thereby detoxifies the proline analog azetidine-2-carboxylate (AZC), however it is unlikely that AZC is a natural substrate as it occurs only in plants belonging to the Lilaceae family. Does not acetylate proline. The chain is N-acetyltransferase MPR1 from Saccharomyces cerevisiae (Baker's yeast).